Reading from the N-terminus, the 388-residue chain is Proteasomal ubiquitin receptor ADRM1 homolog rpn1302 (388 aa).

Positions 15–132 (RGKYGLVSVK…SLINQLIADP (118 aa)) constitute a Pru domain. 2 disordered regions span residues 202–227 (RASS…EEAT) and 368–388 (SDGE…EKDE). The segment covering 368 to 377 (SDGEVEEEGD) has biased composition (acidic residues). The segment covering 378-388 (VEMRESNEKDE) has biased composition (basic and acidic residues).

The protein belongs to the ADRM1 family. Component of the 19S proteasome regulatory particle complex. The 2 S.pombe rpn13 homologs, rpn1301 and rpn1302 are present at a 0.2-1 ratio.

The protein resides in the cytoplasm. The protein localises to the nucleus. Component of the 26S proteasome, a multiprotein complex involved in the ATP-dependent degradation of ubiquitinated proteins. This complex plays a key role in the maintenance of protein homeostasis by removing misfolded or damaged proteins, which could impair cellular functions, and by removing proteins whose functions are no longer required. Therefore, the proteasome participates in numerous cellular processes, including cell cycle progression, apoptosis, or DNA damage repair. Within the complex, functions as a proteasomal ubiquitin receptor. The sequence is that of Proteasomal ubiquitin receptor ADRM1 homolog rpn1302 (rpn1302) from Schizosaccharomyces pombe (strain 972 / ATCC 24843) (Fission yeast).